The primary structure comprises 208 residues: ATP-dependent Clp protease proteolytic subunit (208 aa).

Ser105 (nucleophile) is an active-site residue. His130 is an active-site residue.

It belongs to the peptidase S14 family. In terms of assembly, fourteen ClpP subunits assemble into 2 heptameric rings which stack back to back to give a disk-like structure with a central cavity, resembling the structure of eukaryotic proteasomes.

It is found in the cytoplasm. It carries out the reaction Hydrolysis of proteins to small peptides in the presence of ATP and magnesium. alpha-casein is the usual test substrate. In the absence of ATP, only oligopeptides shorter than five residues are hydrolyzed (such as succinyl-Leu-Tyr-|-NHMec, and Leu-Tyr-Leu-|-Tyr-Trp, in which cleavage of the -Tyr-|-Leu- and -Tyr-|-Trp bonds also occurs).. Functionally, cleaves peptides in various proteins in a process that requires ATP hydrolysis. Has a chymotrypsin-like activity. Plays a major role in the degradation of misfolded proteins. In Xanthomonas axonopodis pv. citri (strain 306), this protein is ATP-dependent Clp protease proteolytic subunit.